The primary structure comprises 346 residues: Methylthioribose-1-phosphate isomerase (346 aa).

Residues 54-56, Arg-91, and Gln-192 contribute to the substrate site; that span reads RGA. The active-site Proton donor is Asp-233. 243–244 lines the substrate pocket; it reads NK.

The protein belongs to the eIF-2B alpha/beta/delta subunits family. MtnA subfamily.

It carries out the reaction 5-(methylsulfanyl)-alpha-D-ribose 1-phosphate = 5-(methylsulfanyl)-D-ribulose 1-phosphate. It participates in amino-acid biosynthesis; L-methionine biosynthesis via salvage pathway; L-methionine from S-methyl-5-thio-alpha-D-ribose 1-phosphate: step 1/6. Functionally, catalyzes the interconversion of methylthioribose-1-phosphate (MTR-1-P) into methylthioribulose-1-phosphate (MTRu-1-P). This chain is Methylthioribose-1-phosphate isomerase, found in Yersinia pseudotuberculosis serotype IB (strain PB1/+).